Consider the following 170-residue polypeptide: Ubiquinone/menaquinone biosynthesis C-methyltransferase UbiE (170 aa).

The span at Met-1–Pro-12 shows a compositional bias: basic and acidic residues. The disordered stretch occupies residues Met-1–Pro-22.

This sequence belongs to the class I-like SAM-binding methyltransferase superfamily. MenG/UbiE family.

The enzyme catalyses a 2-demethylmenaquinol + S-adenosyl-L-methionine = a menaquinol + S-adenosyl-L-homocysteine + H(+). It carries out the reaction a 2-methoxy-6-(all-trans-polyprenyl)benzene-1,4-diol + S-adenosyl-L-methionine = a 5-methoxy-2-methyl-3-(all-trans-polyprenyl)benzene-1,4-diol + S-adenosyl-L-homocysteine + H(+). The protein operates within quinol/quinone metabolism; menaquinone biosynthesis; menaquinol from 1,4-dihydroxy-2-naphthoate: step 2/2. It participates in cofactor biosynthesis; ubiquinone biosynthesis. Its function is as follows. Methyltransferase required for the conversion of demethylmenaquinol (DMKH2) to menaquinol (MKH2) and the conversion of 2-polyprenyl-6-methoxy-1,4-benzoquinol (DDMQH2) to 2-polyprenyl-3-methyl-6-methoxy-1,4-benzoquinol (DMQH2). The protein is Ubiquinone/menaquinone biosynthesis C-methyltransferase UbiE (ubiE) of Ectopseudomonas oleovorans (Pseudomonas oleovorans).